The primary structure comprises 345 residues: S-adenosylmethionine:tRNA ribosyltransferase-isomerase (345 aa).

The protein belongs to the QueA family. In terms of assembly, monomer.

It localises to the cytoplasm. It carries out the reaction 7-aminomethyl-7-carbaguanosine(34) in tRNA + S-adenosyl-L-methionine = epoxyqueuosine(34) in tRNA + adenine + L-methionine + 2 H(+). The protein operates within tRNA modification; tRNA-queuosine biosynthesis. Its function is as follows. Transfers and isomerizes the ribose moiety from AdoMet to the 7-aminomethyl group of 7-deazaguanine (preQ1-tRNA) to give epoxyqueuosine (oQ-tRNA). This is S-adenosylmethionine:tRNA ribosyltransferase-isomerase from Shewanella baltica (strain OS155 / ATCC BAA-1091).